The sequence spans 221 residues: Large ribosomal subunit protein uL3 (221 aa).

A disordered region spans residues 123-156 (GFAGSIKRHNQSRGPESHGSRYHRRPGSMGPIKG).

It belongs to the universal ribosomal protein uL3 family. Part of the 50S ribosomal subunit. Forms a cluster with proteins L14 and L19.

Functionally, one of the primary rRNA binding proteins, it binds directly near the 3'-end of the 23S rRNA, where it nucleates assembly of the 50S subunit. In Aster yellows witches'-broom phytoplasma (strain AYWB), this protein is Large ribosomal subunit protein uL3.